The primary structure comprises 312 residues: Ribonuclease Z (312 aa).

7 residues coordinate Zn(2+): His-63, His-65, Asp-67, His-68, His-140, Asp-211, and His-269. The active-site Proton acceptor is the Asp-67.

Belongs to the RNase Z family. As to quaternary structure, homodimer. Zn(2+) serves as cofactor.

It carries out the reaction Endonucleolytic cleavage of RNA, removing extra 3' nucleotides from tRNA precursor, generating 3' termini of tRNAs. A 3'-hydroxy group is left at the tRNA terminus and a 5'-phosphoryl group is left at the trailer molecule.. Functionally, zinc phosphodiesterase, which displays some tRNA 3'-processing endonuclease activity. Probably involved in tRNA maturation, by removing a 3'-trailer from precursor tRNA. This chain is Ribonuclease Z, found in Shouchella clausii (strain KSM-K16) (Alkalihalobacillus clausii).